Here is a 593-residue protein sequence, read N- to C-terminus: Potassium channel KAT6 (593 aa).

Over 1-33 (MAASRSELLRPAFGEPSPSLGPFVVNPHTCSYR) the chain is Cytoplasmic. Residues 34 to 54 (WWQKFLIVLVLYTAWASPFEL) traverse the membrane as a helical segment. Residues 55-64 (AMEKSASAAL) lie on the Extracellular side of the membrane. The helical transmembrane segment at 65-85 (AVTELVVDAFFAVDIAVSFFV) threads the bilayer. The Cytoplasmic segment spans residues 86–106 (AYRDASTGLLVTDRKKIATRH). Residues 107 to 129 (LARPCLALDVASTIPLQMIYRIV) traverse the membrane as a helical segment. The Extracellular portion of the chain corresponds to 130–138 (SGKRQALYG). A helical; Voltage-sensor membrane pass occupies residues 139 to 159 (LLNLLRLWRLRRVSKLFARLE). The Cytoplasmic segment spans residues 160-173 (KDIRFSYLWTRLIK). The helical transmembrane segment at 174–194 (LLYVTLFAVHFASCIYLWMAF) threads the bilayer. Over 195-221 (HHKAKELTWIGSQFHGFEDRSVWFCYT) the chain is Extracellular. The pore-forming intramembrane region spans 222–241 (CAVYWSITTLATVGYGDLHA). At 242–247 (ANTGEM) the chain is on the extracellular side. A helical membrane pass occupies residues 248–268 (LFSIAFMLFNMGLTSYIIGNI). The Cytoplasmic portion of the chain corresponds to 269 to 593 (TNLVVHETTN…RDGDHLFFSW (325 aa)). Position 350-470 (350-470 (LFQGVSDKLV…VVVFSNFVLY (121 aa))) interacts with a nucleoside 3',5'-cyclic phosphate. Residues 522–593 (RVSIHEHLLN…RDGDHLFFSW (72 aa)) enclose the KHA domain.

The protein belongs to the potassium channel family. Plant (TC 1.A.1.4) subfamily.

The protein localises to the membrane. Its function is as follows. Probable inward-rectifying potassium channel. Assuming opened or closed conformations in response to the voltage difference across the membrane, the channel is activated by hyperpolarization. The protein is Potassium channel KAT6 of Oryza sativa subsp. japonica (Rice).